Consider the following 490-residue polypeptide: Homoserine O-acetyltransferase (490 aa).

The AB hydrolase-1 domain maps to 48–354; it reads NVILVCHALT…NSEYGHDAFL (307 aa). Ser153 acts as the Nucleophile in catalysis. Arg223 serves as a coordination point for substrate. Residues Asp317 and His350 contribute to the active site. Residue Asp351 coordinates substrate. CBS domains are found at residues 377 to 434 and 438 to 490; these read MSHT…ANSI and MTKN…LYEK.

This sequence belongs to the AB hydrolase superfamily. MetX family. As to quaternary structure, homodimer.

It is found in the cytoplasm. The enzyme catalyses L-homoserine + acetyl-CoA = O-acetyl-L-homoserine + CoA. Its pathway is amino-acid biosynthesis; L-methionine biosynthesis via de novo pathway; O-acetyl-L-homoserine from L-homoserine: step 1/1. Functionally, transfers an acetyl group from acetyl-CoA to L-homoserine, forming acetyl-L-homoserine. The protein is Homoserine O-acetyltransferase of Methanosphaera stadtmanae (strain ATCC 43021 / DSM 3091 / JCM 11832 / MCB-3).